We begin with the raw amino-acid sequence, 998 residues long: Protein Smaug (998 aa).

A compositionally biased stretch (polar residues) spans methionine 1–threonine 37. Disordered stretches follow at residues methionine 1 to serine 45, threonine 50 to proline 69, and leucine 329 to serine 370. Low complexity predominate over residues leucine 329–serine 338. 2 positions are modified to phosphoserine: serine 564 and serine 575. The interval glutamate 583 to methionine 763 is interaction with cup. The region spanning glycine 600–lysine 654 is the SAM domain. 2 disordered regions span residues histidine 773–methionine 892 and asparagine 943–lysine 977. 2 stretches are compositionally biased toward polar residues: residues lysine 801–leucine 822 and histidine 854–proline 864. The residue at position 971 (serine 971) is a Phosphoserine.

The protein belongs to the SMAUG family. As to quaternary structure, interacts with oskar (osk). Binds to the 3'-UTR of nos. Interacts with cup, which in turn recruits eIF4-E, leading to an indirect interaction between smg and eIF4-E that prevents mRNA translation.

It localises to the cytoplasm. Translation regulator that binds to the 3'-UTR of specific mRNAs such as nanos (nos) and prevent their translation. Prevents translation of unlocalized nos in the bulk cytoplasm via the recruitment of cup. This Drosophila sechellia (Fruit fly) protein is Protein Smaug.